Reading from the N-terminus, the 842-residue chain is Protein P (842 aa).

The terminal protein domain (TP) stretch occupies residues 1–177; that stretch reads MPLSYQHFRK…FCGSPYSWEQ (177 aa). The spacer stretch occupies residues 178-346; that stretch reads ELQHGRLVFQ…YCLTHIVNLL (169 aa). Residues 218–274 form a disordered region; it reads LKQSRLGLQPQQGSLARGKSGRSGSIRARVPPTTRRSFGVEPSGSGHIDNRASSTSS. The segment at 347–690 is polymerase/reverse transcriptase domain (RT); that stretch reads EDWGPCTEHG…YLHLYPVARR (344 aa). Residues 357–600 form the Reverse transcriptase domain; sequence EHNIRIPRTP…YSLNFMGYVI (244 aa). Mg(2+) is bound by residues D429, D551, and D552.

The protein belongs to the hepadnaviridae P protein family.

It carries out the reaction DNA(n) + a 2'-deoxyribonucleoside 5'-triphosphate = DNA(n+1) + diphosphate. It catalyses the reaction Endonucleolytic cleavage to 5'-phosphomonoester.. With respect to regulation, activated by host HSP70 and HSP40 in vitro to be able to bind the epsilon loop of the pgRNA. Because deletion of the RNase H region renders the protein partly chaperone-independent, the chaperones may be needed indirectly to relieve occlusion of the RNA-binding site by this domain. Inhibited by several reverse-transcriptase inhibitors: Lamivudine, Adefovir and Entecavir. Functionally, multifunctional enzyme that converts the viral RNA genome into dsDNA in viral cytoplasmic capsids. This enzyme displays a DNA polymerase activity that can copy either DNA or RNA templates, and a ribonuclease H (RNase H) activity that cleaves the RNA strand of RNA-DNA heteroduplexes in a partially processive 3'- to 5'-endonucleasic mode. Neo-synthesized pregenomic RNA (pgRNA) are encapsidated together with the P protein, and reverse-transcribed inside the nucleocapsid. Initiation of reverse-transcription occurs first by binding the epsilon loop on the pgRNA genome, and is initiated by protein priming, thereby the 5'-end of (-)DNA is covalently linked to P protein. Partial (+)DNA is synthesized from the (-)DNA template and generates the relaxed circular DNA (RC-DNA) genome. After budding and infection, the RC-DNA migrates in the nucleus, and is converted into a plasmid-like covalently closed circular DNA (cccDNA). The activity of P protein does not seem to be necessary for cccDNA generation, and is presumably released from (+)DNA by host nuclear DNA repair machinery. This is Protein P from Hepatitis B virus genotype C subtype adr (isolate Korea/Kim/1989) (HBV-C).